We begin with the raw amino-acid sequence, 107 residues long: MVNFNQFLKQAQSMQKKMQEAQEQMVNARYTGKAGGRLVEITITGRSEVEKVSIDESLLKAEEKEMLEDLIKVAFNDAKQKCDEDSQNSLSGALNGINLPPGFKMPF.

It belongs to the YbaB/EbfC family. Homodimer.

Its subcellular location is the cytoplasm. The protein localises to the nucleoid. Functionally, binds to DNA and alters its conformation. May be involved in regulation of gene expression, nucleoid organization and DNA protection. This is Nucleoid-associated protein A1E_05550 from Rickettsia canadensis (strain McKiel).